Here is a 615-residue protein sequence, read N- to C-terminus: Probable transporter mch1 (615 aa).

Residues 1–35 (MTGSIGQAPAIDKRDFDINRRSSTPHETAAQEDEA) are disordered. The segment covering 11–20 (IDKRDFDINR) has biased composition (basic and acidic residues). A helical membrane pass occupies residues 84-104 (FVWGVITCLGAGSITAFSLYG). Asn-112 carries N-linked (GlcNAc...) asparagine glycosylation. Helical transmembrane passes span 120–140 (EVSIAAGISMYLPVSLAGYLC), 147–167 (PLTLFAGIAFGLGYSLAAFVY), 182–202 (FWVMVVAFIAIGVATCSMYLA), 218–238 (GIILAVPIAAFGLSGMWQSQV), and 261–281 (FLFLAILLLTIGVIGTFALRI). N-linked (GlcNAc...) asparagine glycosylation occurs at Asn-329. The next 6 helical transmembrane spans lie at 371–391 (IFLADHTMWWLALGFFLVTGP), 428–448 (IIALTSTIARLLTGSLSDLFA), 477–497 (LAFLIPSALLLSLGFLLLASP), 512–532 (LVGLGYGSIFSLVPIIISVVW), 538–558 (GTNWGIVAMFPAAGAAMWGVI), and 583–603 (FGFWSIGCTFSVWVAIVAWLV).

It belongs to the major facilitator superfamily.

It localises to the vacuole membrane. Its function is as follows. Probable transporter. This is Probable transporter mch1 (mch1) from Emericella nidulans (strain FGSC A4 / ATCC 38163 / CBS 112.46 / NRRL 194 / M139) (Aspergillus nidulans).